The following is a 252-amino-acid chain: Large ribosomal subunit protein uL4 (252 aa).

The protein belongs to the universal ribosomal protein uL4 family. Part of the 50S ribosomal subunit.

In terms of biological role, one of the primary rRNA binding proteins, this protein initially binds near the 5'-end of the 23S rRNA. It is important during the early stages of 50S assembly. It makes multiple contacts with different domains of the 23S rRNA in the assembled 50S subunit and ribosome. Its function is as follows. Forms part of the polypeptide exit tunnel. The polypeptide is Large ribosomal subunit protein uL4 (Methanococcus maripaludis (strain C7 / ATCC BAA-1331)).